The primary structure comprises 69 residues: Toxin Tma2 (69 aa).

In terms of domain architecture, LCN-type CS-alpha/beta spans 2-66 (KDDYPVDTAE…SPTKTSKRCN (65 aa)). 4 disulfides stabilise this stretch: cysteine 14-cysteine 65, cysteine 18-cysteine 41, cysteine 27-cysteine 48, and cysteine 31-cysteine 50.

Belongs to the long (4 C-C) scorpion toxin superfamily. Sodium channel inhibitor family. In terms of tissue distribution, expressed by the venom gland.

It localises to the secreted. Functionally, inhibits voltage-gated sodium channels (Nav). This toxin shows insect lethality against crickets. The chain is Toxin Tma2 from Tityus macrochirus (Scorpion).